The sequence spans 502 residues: Glycerol kinase (502 aa).

Residue Thr-13 participates in ADP binding. ATP-binding residues include Thr-13, Thr-14, and Ser-15. Thr-13 lines the sn-glycerol 3-phosphate pocket. Position 17 (Arg-17) interacts with ADP. Sn-glycerol 3-phosphate is bound by residues Arg-83, Glu-84, Tyr-136, and Asp-246. Glycerol is bound by residues Arg-83, Glu-84, Tyr-136, Asp-246, and Gln-247. The ADP site is built by Thr-268 and Gly-311. ATP is bound by residues Thr-268, Gly-311, Gln-315, and Gly-412. ADP is bound by residues Gly-412 and Asn-416.

This sequence belongs to the FGGY kinase family.

The enzyme catalyses glycerol + ATP = sn-glycerol 3-phosphate + ADP + H(+). It functions in the pathway polyol metabolism; glycerol degradation via glycerol kinase pathway; sn-glycerol 3-phosphate from glycerol: step 1/1. Its activity is regulated as follows. Inhibited by fructose 1,6-bisphosphate (FBP). Functionally, key enzyme in the regulation of glycerol uptake and metabolism. Catalyzes the phosphorylation of glycerol to yield sn-glycerol 3-phosphate. The chain is Glycerol kinase from Francisella tularensis subsp. tularensis (strain FSC 198).